A 148-amino-acid chain; its full sequence is Angiogenin-1 (148 aa).

Residues Met1–Pro23 form the signal peptide. His37 functions as the Proton acceptor in the catalytic mechanism. Residue Arg45 coordinates tRNA. 3 disulfide bridges follow: Cys50–Cys105, Cys63–Cys116, and Cys81–Cys131. Residues Lys55–Leu59 carry the Nucleolar localization signal motif. TRNA-binding residues include Cys105 and Ile127. His138 acts as the Proton donor in catalysis.

The protein belongs to the pancreatic ribonuclease family. As to quaternary structure, homodimer. Interacts with RNH1; inhibiting ANG ribonuclease activity. As to expression, serum and milk.

It is found in the secreted. It localises to the nucleus. The protein localises to the nucleolus. Its subcellular location is the cytoplasm. The protein resides in the stress granule. Functionally, secreted ribonuclease that can either promote or restrict cell proliferation of target cells, depending on the context. Endocytosed in target cells via its receptor PLXNB2 and translocates to the cytoplasm or nucleus. Under stress conditions, localizes to the cytoplasm and promotes the assembly of stress granules (SGs): specifically cleaves a subset of tRNAs within anticodon loops to produce tRNA-derived stress-induced fragments (tiRNAs), resulting in translation repression and inhibition of cell proliferation. tiRNas also prevent formation of apoptosome, thereby promoting cell survival. Preferentially cleaves RNAs between a pyrimidine and an adenosine residue, suggesting that it cleaves the anticodon loop of tRNA(Ala) (32-UUAGCAU-38) after positions 33 and 36. Cleaves a subset of tRNAs, including tRNA(Ala), tRNA(Glu), tRNA(Gly), tRNA(Lys), tRNA(Val), tRNA(His), tRNA(Asp) and tRNA(Sec). Under growth conditions and in differentiated cells, translocates to the nucleus and stimulates ribosomal RNA (rRNA) transcription, including that containing the initiation site sequences of 45S rRNA, thereby promoting cell growth and proliferation. Angiogenin induces vascularization of normal and malignant tissues via its ability to promote rRNA transcription. This Bos taurus (Bovine) protein is Angiogenin-1 (ANG1).